Consider the following 94-residue polypeptide: Small ribosomal subunit protein uS19 (94 aa).

This sequence belongs to the universal ribosomal protein uS19 family.

Functionally, protein S19 forms a complex with S13 that binds strongly to the 16S ribosomal RNA. The protein is Small ribosomal subunit protein uS19 of Anaplasma phagocytophilum (strain HZ).